Consider the following 152-residue polypeptide: SKP1-like protein 11 (152 aa).

The tract at residues 94 to 152 is interaction with the F-box domain of F-box proteins; the sequence is ILAANYLNIKSLLDLTCQTVADMIKGKTPEEIRSTFNIENDFTPEEEEAVRKENQWAFE.

This sequence belongs to the SKP1 family. Part of a SCF (SKP1-cullin-F-box) protein ligase complex. Interacts with ADO3/FKF1, COI1/FBL2, EBF1/FBL6, PP2A13, PP2B10, UFO, SKIP2, SKIP15, SKIP16, SKIP32, CPR1/CPR30, At1g55000, At1g67340, At1g78100, At3g04660, At3g16740, At3g61590, At4g38940 and At5g49610. In terms of tissue distribution, expressed in young seedlings, cotyledons, roots, leaves, floral stems, inflorescences, pollen, and siliques, with a slightly higher level in inflorescence than in other tissues.

Its subcellular location is the nucleus. Its pathway is protein modification; protein ubiquitination. In terms of biological role, involved in ubiquitination and subsequent proteasomal degradation of target proteins. Together with CUL1, RBX1 and a F-box protein, it forms a SCF E3 ubiquitin ligase complex. The functional specificity of this complex depends on the type of F-box protein. In the SCF complex, it serves as an adapter that links the F-box protein to CUL1. Plays a role during early flowers reproductive development. This is SKP1-like protein 11 (ASK11) from Arabidopsis thaliana (Mouse-ear cress).